A 687-amino-acid chain; its full sequence is Mitochondrial 15S rRNA processing factor ppr3 (687 aa).

The transit peptide at 1–49 (MLNKCSGSLTLLAVRRFCGPCRRLHYHKDNPNNINIAKNLLNNNIQARC) directs the protein to the mitochondrion. PPR repeat units follow at residues 262-296 (NGLVYQSYAIALSSLGKHKDLVALYSEQKSVSITP), 297-331 (SKDFLNACIKAFSRTKEFTKAWEVFNFMKFTATSI), 334-368 (SAETYGLMIQICSSQYNPEKALDLYNEMKLRPIDP), and 372-407 (TTFVINNLIHALATDVRFQTVAFSLLQDLSHYGLRP).

It belongs to the CCM1 family. As to quaternary structure, binds to mitochondrial small subunit 15S rRNA.

It localises to the mitochondrion. Regulates mitochondrial small subunit maturation by controlling 15S rRNA 5'-end processing. Localizes to the 5' precursor of the 15S rRNA in a position that is subsequently occupied by mS47 in the mature yeast mtSSU. Uses structure and sequence-specific RNA recognition, binding to a single-stranded region of the precursor and specifically recognizing bases -6 to -1. The exchange of Ccm1 for mS47 is coupled to the irreversible removal of precursor rRNA that is accompanied by conformational changes of the mitoribosomal proteins uS5m and mS26. These conformational changes signal completion of 5'-end rRNA processing through protection of the mature 5'-end of the 15S rRNA and stabilization of mS47. The removal of the 5' precursor together with the dissociation of Ccm1 may be catalyzed by the 5'-3' exoribonuclease Pet127. Involved in the specific removal of group I introns in mitochondrial encoded transcripts. The polypeptide is Mitochondrial 15S rRNA processing factor ppr3 (Schizosaccharomyces pombe (strain 972 / ATCC 24843) (Fission yeast)).